Consider the following 348-residue polypeptide: Guanine nucleotide-binding protein alpha-13 subunit (348 aa).

Glycine 2 carries the N-myristoyl glycine lipid modification. The S-palmitoyl cysteine moiety is linked to residue cysteine 3. In terms of domain architecture, G-alpha spans 34-348 (SHIRLLLLGS…VFKDIAKRKK (315 aa)). The interval 37–50 (RLLLLGSAESGKTT) is G1 motif. GTP-binding positions include 42–49 (GSAESGKT), 176–182 (IMAYVPT), 201–205 (DIGGQ), 270–273 (NEID), and alanine 326. The segment at 174–182 (DLIMAYVPT) is G2 motif. Mg(2+) is bound at residue threonine 182. The interval 197-206 (FQLFDIGGQK) is G3 motif. Residues 266–273 (YLFLNEID) are G4 motif. The interval 324-329 (CIAIDT) is G5 motif.

Belongs to the G-alpha family. As to quaternary structure, g proteins are composed of 3 units; alpha, beta and gamma. The alpha chain contains the guanine nucleotide binding site.

Its function is as follows. Guanine nucleotide-binding proteins (G proteins) are involved as modulators or transducers in various transmembrane signaling systems. The chain is Guanine nucleotide-binding protein alpha-13 subunit (gpa-13) from Caenorhabditis elegans.